We begin with the raw amino-acid sequence, 284 residues long: D-tagatose-1,6-bisphosphate aldolase subunit GatY (284 aa).

D82 serves as the catalytic Proton donor. H83 and H180 together coordinate Zn(2+). Residue G181 coordinates dihydroxyacetone phosphate. H208 contributes to the Zn(2+) binding site. Dihydroxyacetone phosphate-binding positions include 209 to 211 (GAS) and 230 to 233 (NVAT).

This sequence belongs to the class II fructose-bisphosphate aldolase family. TagBP aldolase GatY subfamily. As to quaternary structure, forms a complex with GatZ. The cofactor is Zn(2+).

The catalysed reaction is D-tagatofuranose 1,6-bisphosphate = D-glyceraldehyde 3-phosphate + dihydroxyacetone phosphate. It participates in carbohydrate metabolism; D-tagatose 6-phosphate degradation; D-glyceraldehyde 3-phosphate and glycerone phosphate from D-tagatose 6-phosphate: step 2/2. Its function is as follows. Catalytic subunit of the tagatose-1,6-bisphosphate aldolase GatYZ, which catalyzes the reversible aldol condensation of dihydroxyacetone phosphate (DHAP or glycerone-phosphate) with glyceraldehyde 3-phosphate (G3P) to produce tagatose 1,6-bisphosphate (TBP). Requires GatZ subunit for full activity and stability. Is involved in the catabolism of galactitol. This Salmonella choleraesuis (strain SC-B67) protein is D-tagatose-1,6-bisphosphate aldolase subunit GatY.